We begin with the raw amino-acid sequence, 137 residues long: Small integral membrane protein 9 (137 aa).

The N-terminal stretch at Met-1–Thr-23 is a signal peptide. The Extracellular portion of the chain corresponds to Ala-24–Ser-84. Residues Ile-85–Val-105 traverse the membrane as a helical segment. The Cytoplasmic segment spans residues Asn-106–Gly-137.

The protein localises to the cell membrane. The chain is Small integral membrane protein 9 (Smim9) from Mus musculus (Mouse).